Here is a 310-residue protein sequence, read N- to C-terminus: Probable manganese-dependent inorganic pyrophosphatase (310 aa).

6 residues coordinate Mn(2+): H9, D13, D15, D75, H97, and D149.

This sequence belongs to the PPase class C family. Mn(2+) serves as cofactor.

The protein localises to the cytoplasm. It carries out the reaction diphosphate + H2O = 2 phosphate + H(+). The polypeptide is Probable manganese-dependent inorganic pyrophosphatase (Brevibacillus brevis (strain 47 / JCM 6285 / NBRC 100599)).